Consider the following 130-residue polypeptide: Small ribosomal subunit protein uS9 (130 aa).

It belongs to the universal ribosomal protein uS9 family.

This Burkholderia ambifaria (strain MC40-6) protein is Small ribosomal subunit protein uS9.